The primary structure comprises 181 residues: Histone deacetylase complex subunit SAP30L-B (181 aa).

2 disulfide bridges follow: Cys26/Cys27 and Cys35/Cys71. The Atypical zinc-finger motif lies at 26 to 74 (CCLIDGGERCPRPAGNASFSKRVQKSISQKKLKLDIDKSVRHLYICDFH). The segment at 82–103 (RNKRKRKTSDDGGDSPEHETDV) is disordered. Residues 83–88 (NKRKRK) carry the Nuclear localization signal (NLS) motif. Residues 85-87 (RKR) are important for DNA and phosphoinositide binding.

This sequence belongs to the SAP30 family. Interacts with components of the histone deacetylase complex sin3a, hdac1 and hdac2. Binds histones and nucleosomes.

The protein localises to the nucleus. It localises to the nucleolus. Functionally, functions as a transcription repressor, probably via its interaction with histone deacetylase complexes. Involved in the functional recruitment of the class 1 Sin3-histone deacetylase complex (HDAC) to the nucleolus. Binds DNA, apparently without sequence-specificity, and bends bound double-stranded DNA. Binds phosphoinositol phosphates (phosphoinositol 3-phosphate, phosphoinositol 4-phosphate and phosphoinositol 5-phosphate) via the same basic sequence motif that mediates DNA binding and nuclear import. This Xenopus laevis (African clawed frog) protein is Histone deacetylase complex subunit SAP30L-B (sap30l-b).